A 459-amino-acid polypeptide reads, in one-letter code: Glycosyl hydrolase family 109 protein (459 aa).

A signal peptide (tat-type signal) is located at residues 1-31; it reads MHNIHRRNFLKAAGAATAGLVTANIALNAYA. NAD(+) contacts are provided by residues 64 to 65, Asp-86, 135 to 138, 155 to 156, and Asn-184; these read ER, WEWH, and EV. Residues Tyr-213, Arg-232, 244–247, and Tyr-326 each bind substrate; that span reads YPTH. Residue Tyr-244 coordinates NAD(+).

Belongs to the Gfo/Idh/MocA family. Glycosyl hydrolase 109 subfamily. NAD(+) is required as a cofactor. Post-translationally, predicted to be exported by the Tat system. The position of the signal peptide cleavage has not been experimentally proven.

In terms of biological role, glycosidase. In Shewanella baltica (strain OS155 / ATCC BAA-1091), this protein is Glycosyl hydrolase family 109 protein.